The sequence spans 381 residues: Heterogeneous nuclear rnp K-like protein 2 (381 aa).

Residues 1–34 (MSQFFEAATPVAIPTNNTNGGSSDAGSAATGGAP) form a disordered region. Over residues 15-33 (TNNTNGGSSDAGSAATGGA) the composition is skewed to low complexity. KH domains are found at residues 43–107 (TINH…IGDI), 156–221 (IGYV…LIEI), and 258–326 (NTRI…ESML). Residues 344-381 (LEAAEGDATVVTERSDSASFLEEKEEPQENHDNKEEQS) form a disordered region. Phosphoserine occurs at positions 358, 360, and 362. Positions 370 to 381 (PQENHDNKEEQS) are enriched in basic and acidic residues.

The protein belongs to the HEK2 family. In terms of assembly, binds RNA. In terms of processing, phosphorylated by the plasma membrane-Anchored casein kinase YCK1. Phosphorylation at its C-terminus reduces its RNA-binding capacity.

The protein resides in the cytoplasm. Its subcellular location is the P-body. It is found in the nucleus. It localises to the chromosome. The protein localises to the telomere. RNA-binding protein involved in the correct localization of transcripts in the cell. RNA localization is a widespread mechanism for achieving localized protein synthesis. Required for the asymmetric localization to the daughter cell nucleus of the ASH1 transcript, coding for a specific repressor of transcription. Overexpression inhibits translation of the ASH1 transcript. Involved in the stability of transcripts, like the MTL1 mRNA. Involved in structural and functional organization of telomeric chromatin and regulates silencing at the HMR locus. This is Heterogeneous nuclear rnp K-like protein 2 (HEK2) from Saccharomyces cerevisiae (strain YJM789) (Baker's yeast).